The chain runs to 213 residues: 3,4-dihydroxy-2-butanone 4-phosphate synthase (213 aa).

D-ribulose 5-phosphate contacts are provided by residues 27–28 (RE), aspartate 32, 140–144 (RTGHT), and glutamate 164. Residue glutamate 28 participates in Mg(2+) binding. Residue histidine 143 participates in Mg(2+) binding.

The protein belongs to the DHBP synthase family. As to quaternary structure, homodimer. The cofactor is Mg(2+). It depends on Mn(2+) as a cofactor.

It carries out the reaction D-ribulose 5-phosphate = (2S)-2-hydroxy-3-oxobutyl phosphate + formate + H(+). It participates in cofactor biosynthesis; riboflavin biosynthesis; 2-hydroxy-3-oxobutyl phosphate from D-ribulose 5-phosphate: step 1/1. In terms of biological role, catalyzes the conversion of D-ribulose 5-phosphate to formate and 3,4-dihydroxy-2-butanone 4-phosphate. The chain is 3,4-dihydroxy-2-butanone 4-phosphate synthase from Agrobacterium fabrum (strain C58 / ATCC 33970) (Agrobacterium tumefaciens (strain C58)).